A 290-amino-acid chain; its full sequence is uncharacterized protein (290 aa).

It belongs to the glycosyltransferase 2 family.

This is an uncharacterized protein from Methanocaldococcus jannaschii (strain ATCC 43067 / DSM 2661 / JAL-1 / JCM 10045 / NBRC 100440) (Methanococcus jannaschii).